The following is a 302-amino-acid chain: Sulfate adenylyltransferase subunit 2 (302 aa).

The protein belongs to the PAPS reductase family. CysD subfamily. Heterodimer composed of CysD, the smaller subunit, and CysN.

It carries out the reaction sulfate + ATP + H(+) = adenosine 5'-phosphosulfate + diphosphate. It functions in the pathway sulfur metabolism; hydrogen sulfide biosynthesis; sulfite from sulfate: step 1/3. In terms of biological role, with CysN forms the ATP sulfurylase (ATPS) that catalyzes the adenylation of sulfate producing adenosine 5'-phosphosulfate (APS) and diphosphate, the first enzymatic step in sulfur assimilation pathway. APS synthesis involves the formation of a high-energy phosphoric-sulfuric acid anhydride bond driven by GTP hydrolysis by CysN coupled to ATP hydrolysis by CysD. This is Sulfate adenylyltransferase subunit 2 from Escherichia coli O6:K15:H31 (strain 536 / UPEC).